The primary structure comprises 138 residues: Large ribosomal subunit protein bL17 (138 aa).

Belongs to the bacterial ribosomal protein bL17 family. As to quaternary structure, part of the 50S ribosomal subunit. Contacts protein L32.

The polypeptide is Large ribosomal subunit protein bL17 (Nitrobacter hamburgensis (strain DSM 10229 / NCIMB 13809 / X14)).